Consider the following 687-residue polypeptide: DNA ligase (687 aa).

Residues 34–38 (DAEYD), 83–84 (SL), and E117 contribute to the NAD(+) site. K119 serves as the catalytic N6-AMP-lysine intermediate. NAD(+) contacts are provided by R140, E182, K298, and K322. Positions 416, 419, 434, and 439 each coordinate Zn(2+). One can recognise a BRCT domain in the interval 609–687 (EARGPFAGKT…EEEFVRLLKE (79 aa)).

This sequence belongs to the NAD-dependent DNA ligase family. LigA subfamily. It depends on Mg(2+) as a cofactor. The cofactor is Mn(2+).

The catalysed reaction is NAD(+) + (deoxyribonucleotide)n-3'-hydroxyl + 5'-phospho-(deoxyribonucleotide)m = (deoxyribonucleotide)n+m + AMP + beta-nicotinamide D-nucleotide.. Functionally, DNA ligase that catalyzes the formation of phosphodiester linkages between 5'-phosphoryl and 3'-hydroxyl groups in double-stranded DNA using NAD as a coenzyme and as the energy source for the reaction. It is essential for DNA replication and repair of damaged DNA. This is DNA ligase from Anaeromyxobacter dehalogenans (strain 2CP-C).